The chain runs to 162 residues: Corticoliberin (162 aa).

Positions 1–24 are cleaved as a signal peptide; that stretch reads MKFQLWVSTGILLVSLLPCHECRA. Positions 25 to 119 are excised as a propeptide; that stretch reads FIKSPASSPG…QEDPTEKAKR (95 aa). Positions 91-122 are disordered; it reads SQPGMRAASLDGADSPYSAQEDPTEKAKRAEE. Positions 113–122 are enriched in basic and acidic residues; that stretch reads PTEKAKRAEE. Isoleucine amide is present on isoleucine 160.

Belongs to the sauvagine/corticotropin-releasing factor/urotensin I family.

It is found in the secreted. Functionally, this hormone from hypothalamus regulates the release of corticotropin from pituitary gland. The polypeptide is Corticoliberin (crh) (Xenopus laevis (African clawed frog)).